The sequence spans 220 residues: Deoxyribose-phosphate aldolase (220 aa).

Catalysis depends on D89, which acts as the Proton donor/acceptor. K151 (schiff-base intermediate with acetaldehyde) is an active-site residue. The active-site Proton donor/acceptor is the K180.

It belongs to the DeoC/FbaB aldolase family. DeoC type 1 subfamily.

Its subcellular location is the cytoplasm. The catalysed reaction is 2-deoxy-D-ribose 5-phosphate = D-glyceraldehyde 3-phosphate + acetaldehyde. It participates in carbohydrate degradation; 2-deoxy-D-ribose 1-phosphate degradation; D-glyceraldehyde 3-phosphate and acetaldehyde from 2-deoxy-alpha-D-ribose 1-phosphate: step 2/2. Catalyzes a reversible aldol reaction between acetaldehyde and D-glyceraldehyde 3-phosphate to generate 2-deoxy-D-ribose 5-phosphate. In Streptococcus pneumoniae (strain Taiwan19F-14), this protein is Deoxyribose-phosphate aldolase.